Reading from the N-terminus, the 31-residue chain is Large ribosomal subunit protein bL21 (31 aa).

It belongs to the bacterial ribosomal protein bL21 family. Part of the 50S ribosomal subunit. Contacts protein L20.

Functionally, this protein binds to 23S rRNA in the presence of protein L20. This is Large ribosomal subunit protein bL21 (rplU) from Streptococcus thermophilus.